Consider the following 442-residue polypeptide: MKPGPPHRAGAAHGAGAGAGAAAGPGARGLLLPPLLLLLLAGRAAGAQRWRSENFERPVDLEGSGDDDSFPDDELDDLYSGSGSGYFEQESGIETAMRFSPDVALAVSTTPAVLPTTNIQPVGTPFEELPSERPTLEPATSPLVVTEVPEEPSQRATTVSTTMATTAATSTGDPTVATVPATVATATPSTPAAPPFTATTAVIRTTGVRRLLPLPLTTVATARATTPEAPSPPTTAAVLDTEAPTPRLVSTATSRPRALPRPATTQEPDIPERSTLPLGTTAPGPTEVAQTPTPETFLTTIRDEPEVPVSGGPSGDFELPEEETTQPDTANEVVAVGGAAAKASSPPGTLPKGARPGPGLLDNAIDSGSSAAQLPQKSILERKEVLVAVIVGGVVGALFAAFLVTLLIYRMKKKDEGSYTLEEPKQASVTYQKPDKQEEFYA.

Disordered regions lie at residues 1-24 (MKPG…AAAG) and 57-87 (RPVD…SGYF). Residues 1 to 387 (MKPGPPHRAG…SILERKEVLV (387 aa)) lie on the Extracellular side of the membrane. Residues 13–24 (HGAGAGAGAAAG) are compositionally biased toward gly residues. The segment covering 63 to 77 (GSGDDDSFPDDELDD) has biased composition (acidic residues). Residues serine 80, serine 82, serine 84, and serine 91 are each glycosylated (O-linked (Xyl...) (glycosaminoglycan) serine). The O-linked (GalNAc) serine; by GALNT13 glycan is linked to serine 108. Residues threonine 109 and threonine 110 are each glycosylated (O-linked (GalNAc) threonine; by GALNT13). 3 disordered regions span residues 150-173 (EEPS…STGD), 225-326 (TTPE…ETTQ), and 340-367 (AAKA…AIDS). 3 stretches are compositionally biased toward low complexity: residues 156 to 173 (ATTV…STGD), 225 to 238 (TTPE…TAAV), and 275 to 286 (TLPLGTTAPGPT). O-linked (GalNAc) serine; by GALNT13 glycosylation is present at serine 160. Residues threonine 161, threonine 162, and threonine 169 are each glycosylated (O-linked (GalNAc) threonine; by GALNT13). Serine 170 carries O-linked (GalNAc) serine; by GALNT13 glycosylation. O-linked (GalNAc) threonine; by GALNT13 glycosylation occurs at threonine 171. Polar residues predominate over residues 288 to 299 (VAQTPTPETFLT). Residues serine 314 and serine 367 are each glycosylated (O-linked (Xyl...) (glycosaminoglycan) serine). A helical membrane pass occupies residues 388-408 (AVIVGGVVGALFAAFLVTLLI). Tyrosine 409, tyrosine 419, tyrosine 431, and tyrosine 441 each carry phosphotyrosine. The Cytoplasmic portion of the chain corresponds to 409-442 (YRMKKKDEGSYTLEEPKQASVTYQKPDKQEEFYA). The interval 419–442 (YTLEEPKQASVTYQKPDKQEEFYA) is disordered. A compositionally biased stretch (basic and acidic residues) spans 433–442 (KPDKQEEFYA).

Belongs to the syndecan proteoglycan family. As to quaternary structure, interacts with TIAM1. Interacts with PTN (via heparan sulfate chains); this interaction mediates the neurite outgrowth-promoting signal from PTN to the cytoskeleton of growing neurites; this interaction mediates osteoblast recruitment. Interacts with MDK; this interaction induces SDC3 clustering; this interaction induces neuronal cell adhesion and neurite outgrowth. In terms of processing, O-glycosylated within the Thr/Ser-rich region which could interact with lectin domains on other molecules. Expressed in the nervous system, the adrenal gland, and the spleen.

It localises to the cell membrane. In terms of biological role, cell surface proteoglycan that may bear heparan sulfate. May have a role in the organization of cell shape by affecting the actin cytoskeleton, possibly by transferring signals from the cell surface in a sugar-dependent mechanism. The chain is Syndecan-3 (SDC3) from Homo sapiens (Human).